A 437-amino-acid polypeptide reads, in one-letter code: tRNA-2-methylthio-N(6)-dimethylallyladenosine synthase (437 aa).

An MTTase N-terminal domain is found at 1 to 115 (MKVYIETMGC…ISQVIHKEKA (115 aa)). [4Fe-4S] cluster-binding residues include Cys10, Cys46, Cys78, Cys148, Cys152, and Cys155. Residues 134–367 (KKAQIRSLLN…QNRHKEILEE (234 aa)) form the Radical SAM core domain. The TRAM domain maps to 370–436 (KLEVGKTHVV…KGRLIATAKG (67 aa)).

It belongs to the methylthiotransferase family. MiaB subfamily. As to quaternary structure, monomer. Requires [4Fe-4S] cluster as cofactor.

It localises to the cytoplasm. The catalysed reaction is N(6)-dimethylallyladenosine(37) in tRNA + (sulfur carrier)-SH + AH2 + 2 S-adenosyl-L-methionine = 2-methylsulfanyl-N(6)-dimethylallyladenosine(37) in tRNA + (sulfur carrier)-H + 5'-deoxyadenosine + L-methionine + A + S-adenosyl-L-homocysteine + 2 H(+). In terms of biological role, catalyzes the methylthiolation of N6-(dimethylallyl)adenosine (i(6)A), leading to the formation of 2-methylthio-N6-(dimethylallyl)adenosine (ms(2)i(6)A) at position 37 in tRNAs that read codons beginning with uridine. This Helicobacter pylori (strain Shi470) protein is tRNA-2-methylthio-N(6)-dimethylallyladenosine synthase.